Consider the following 346-residue polypeptide: Methylthioribose-1-phosphate isomerase (346 aa).

Residues 46 to 48 (RGA), Arg-89, and Gln-196 contribute to the substrate site. Residue Asp-237 is the Proton donor of the active site. A substrate-binding site is contributed by 247 to 248 (NK).

It belongs to the eIF-2B alpha/beta/delta subunits family. MtnA subfamily.

It carries out the reaction 5-(methylsulfanyl)-alpha-D-ribose 1-phosphate = 5-(methylsulfanyl)-D-ribulose 1-phosphate. It functions in the pathway amino-acid biosynthesis; L-methionine biosynthesis via salvage pathway; L-methionine from S-methyl-5-thio-alpha-D-ribose 1-phosphate: step 1/6. Its function is as follows. Catalyzes the interconversion of methylthioribose-1-phosphate (MTR-1-P) into methylthioribulose-1-phosphate (MTRu-1-P). This Geobacter sp. (strain M21) protein is Methylthioribose-1-phosphate isomerase.